The sequence spans 570 residues: Hemagglutinin-neuraminidase (570 aa).

Over 1 to 26 (MNRAVCQVALENDEREAKNTWRLVFR) the chain is Intravirion. The chain crosses the membrane as a helical span at residues 27-48 (IAILLLTVMTLAISAAALAYSM). At 49-570 (EASTPGDLVS…LVEILKDDGV (522 aa)) the chain is on the virion surface side. Residue Asn119 is glycosylated (N-linked (GlcNAc...) asparagine; by host). The interval 124 to 152 (GAPVHDPDYIGGIGKELIVDDTSDVTSFY) is important for interaction with fusion/F protein. 3 disulfides stabilise this stretch: Cys172–Cys195, Cys185–Cys246, and Cys237–Cys250. The involved in neuraminidase activity stretch occupies residues 233–238 (NRKSCS). Residues Asn340 and Asn432 are each glycosylated (N-linked (GlcNAc...) asparagine; by host). Disulfide bonds link Cys343–Cys460 and Cys454–Cys464. N-linked (GlcNAc...) asparagine; by host glycosylation is found at Asn480, Asn507, and Asn537. The cysteines at positions 530 and 541 are disulfide-linked.

It belongs to the paramyxoviruses hemagglutinin-neuraminidase family. Homotetramer; composed of disulfide-linked homodimers. Interacts with F protein trimer. Interacts with host CG-1B; this interaction inhibits viral adsorption and replication rather than internalization.

The protein resides in the virion membrane. Its subcellular location is the host cell membrane. The enzyme catalyses Hydrolysis of alpha-(2-&gt;3)-, alpha-(2-&gt;6)-, alpha-(2-&gt;8)- glycosidic linkages of terminal sialic acid residues in oligosaccharides, glycoproteins, glycolipids, colominic acid and synthetic substrates.. In terms of biological role, mediates the viral entry into the host cell together with fusion/F protein. Attaches the virus to sialic acid-containing cell receptors and thereby initiates infection. Binding of HN protein to the receptor induces a conformational change that allows the F protein to trigger virion/cell membranes fusion. Its function is as follows. Neuraminidase activity ensures the efficient spread of the virus by dissociating the mature virions from the neuraminic acid containing glycoproteins. The polypeptide is Hemagglutinin-neuraminidase (HN) (Gallus gallus (Chicken)).